A 199-amino-acid polypeptide reads, in one-letter code: Dephospho-CoA kinase (199 aa).

A DPCK domain is found at 3–199; sequence ILGLTGSIGM…EVVKMPQRRA (197 aa). Residue 11–16 participates in ATP binding; that stretch reads GMGKST.

The protein belongs to the CoaE family.

The protein resides in the cytoplasm. The catalysed reaction is 3'-dephospho-CoA + ATP = ADP + CoA + H(+). It functions in the pathway cofactor biosynthesis; coenzyme A biosynthesis; CoA from (R)-pantothenate: step 5/5. Its function is as follows. Catalyzes the phosphorylation of the 3'-hydroxyl group of dephosphocoenzyme A to form coenzyme A. This is Dephospho-CoA kinase from Bradyrhizobium diazoefficiens (strain JCM 10833 / BCRC 13528 / IAM 13628 / NBRC 14792 / USDA 110).